We begin with the raw amino-acid sequence, 1048 residues long: Calcium-transporting ATPase, endoplasmic reticulum-type (1048 aa).

Residues 1–63 (MEEKPFPAWS…WRLVLEQFDD (63 aa)) are Cytoplasmic-facing. The chain crosses the membrane as a helical span at residues 64–84 (TLVKILLGAAFISFVLAYVNQ). At 85 to 93 (DETGESGFE) the chain is on the lumenal side. The chain crosses the membrane as a helical span at residues 94–114 (AYVEPLVILWILVLNAIVGVW). At 115–213 (QESNAEKALE…DCELQAKENM (99 aa)) the chain is on the cytoplasmic side. A helical membrane pass occupies residues 214–234 (VFAGTTVVNGSCICIVVNTGM). Residues 235-267 (CTEIGKIQRQIHDASMEESDTPLKKKLDEFGNR) lie on the Lumenal side of the membrane. Residues 268–288 (LTFAIGVVCLVVWAINYKYFL) traverse the membrane as a helical segment. Residues 289–312 (SWEVVDDWPSDFRFSFEKCAYYFK) are Cytoplasmic-facing. The chain crosses the membrane as a helical span at residues 313 to 333 (IAVALAVAAIPEGLPSVITTC). 4 residues coordinate Ca(2+): Val319, Ala320, Ile322, and Glu324. Topologically, residues 334 to 800 (LALGTRKMAQ…ISSNVGEVIS (467 aa)) are lumenal. The active-site 4-aspartylphosphate intermediate is Asp366. 2 residues coordinate Mg(2+): Asp728 and Asp732. Ca(2+) is bound by residues Asn794 and Glu797. Residues 801-821 (IFLTAVLGIPECLIPVQLLWV) traverse the membrane as a helical segment. Residues Asn822, Thr825, and Asp826 each contribute to the Ca(2+) site. The Cytoplasmic segment spans residues 822-862 (NLVTDGPPATALGFNPADVDIMQKPPRKNTDALINSWVFFR). A helical transmembrane segment spans residues 863 to 883 (YMVIGSYVGIATVGIFIVWYT). At 884 to 944 (QASFLGINIV…CEYFTVGKVK (61 aa)) the chain is on the lumenal side. The chain crosses the membrane as a helical span at residues 945–965 (AMTLSLSVLVAIEMFNSLNAL). Ca(2+) is bound at residue Glu957. Over 966–981 (SEDNSLIKMPPWRNPW) the chain is Cytoplasmic. A helical transmembrane segment spans residues 982–1002 (LLVAMSLSFALHSVILYVPFL). At 1003-1007 (ADIFG) the chain is on the lumenal side. Residues 1008 to 1028 (IVPLSLYEWLLVILLSAPVIL) form a helical membrane-spanning segment. Topologically, residues 1029–1048 (IDEVLKFVGRRRRRTKLKAA) are cytoplasmic.

Belongs to the cation transport ATPase (P-type) (TC 3.A.3) family. Type IIA subfamily. As to expression, 9-fold higher level in roots compared with leaves.

It localises to the endoplasmic reticulum membrane. The enzyme catalyses Ca(2+)(in) + ATP + H2O = Ca(2+)(out) + ADP + phosphate + H(+). Its function is as follows. This magnesium-dependent enzyme catalyzes the hydrolysis of ATP coupled with the translocation of calcium from the cytosol to an endomembrane compartment. The polypeptide is Calcium-transporting ATPase, endoplasmic reticulum-type (Solanum lycopersicum (Tomato)).